A 330-amino-acid chain; its full sequence is Ketol-acid reductoisomerase (NADP(+)) (330 aa).

In terms of domain architecture, KARI N-terminal Rossmann spans 1–182; sequence MAVVYYDQDA…GATRAGVIET (182 aa). Residues 25 to 28, arginine 48, serine 51, serine 53, and 83 to 86 contribute to the NADP(+) site; these read YGSQ and DETQ. Histidine 108 is an active-site residue. Glycine 134 contacts NADP(+). One can recognise a KARI C-terminal knotted domain in the interval 183–328; the sequence is TFKEETETDL…DQLREMMSWL (146 aa). Residues aspartate 191, glutamate 195, glutamate 227, and glutamate 231 each contribute to the Mg(2+) site. Residue serine 252 participates in substrate binding.

The protein belongs to the ketol-acid reductoisomerase family. It depends on Mg(2+) as a cofactor.

The enzyme catalyses (2R)-2,3-dihydroxy-3-methylbutanoate + NADP(+) = (2S)-2-acetolactate + NADPH + H(+). It catalyses the reaction (2R,3R)-2,3-dihydroxy-3-methylpentanoate + NADP(+) = (S)-2-ethyl-2-hydroxy-3-oxobutanoate + NADPH + H(+). It participates in amino-acid biosynthesis; L-isoleucine biosynthesis; L-isoleucine from 2-oxobutanoate: step 2/4. It functions in the pathway amino-acid biosynthesis; L-valine biosynthesis; L-valine from pyruvate: step 2/4. Involved in the biosynthesis of branched-chain amino acids (BCAA). Catalyzes an alkyl-migration followed by a ketol-acid reduction of (S)-2-acetolactate (S2AL) to yield (R)-2,3-dihydroxy-isovalerate. In the isomerase reaction, S2AL is rearranged via a Mg-dependent methyl migration to produce 3-hydroxy-3-methyl-2-ketobutyrate (HMKB). In the reductase reaction, this 2-ketoacid undergoes a metal-dependent reduction by NADPH to yield (R)-2,3-dihydroxy-isovalerate. The protein is Ketol-acid reductoisomerase (NADP(+)) of Moorella thermoacetica (strain ATCC 39073 / JCM 9320).